The sequence spans 498 residues: ATP synthase subunit beta, chloroplastic (498 aa).

172-179 provides a ligand contact to ATP; the sequence is GGAGVGKT.

The protein belongs to the ATPase alpha/beta chains family. F-type ATPases have 2 components, CF(1) - the catalytic core - and CF(0) - the membrane proton channel. CF(1) has five subunits: alpha(3), beta(3), gamma(1), delta(1), epsilon(1). CF(0) has four main subunits: a(1), b(1), b'(1) and c(9-12).

The protein resides in the plastid. The protein localises to the chloroplast thylakoid membrane. It carries out the reaction ATP + H2O + 4 H(+)(in) = ADP + phosphate + 5 H(+)(out). In terms of biological role, produces ATP from ADP in the presence of a proton gradient across the membrane. The catalytic sites are hosted primarily by the beta subunits. The protein is ATP synthase subunit beta, chloroplastic of Buxus microphylla (Littleleaf boxwood).